Here is a 422-residue protein sequence, read N- to C-terminus: G-protein coupled receptor 151 protein (422 aa).

The Extracellular portion of the chain corresponds to 1–45; that stretch reads MGKAMLRAGFADTNSSNMNESFARLHFAGGYLPSDSKDWRTIIPS. 2 N-linked (GlcNAc...) asparagine glycosylation sites follow: Asn-14 and Asn-19. A helical transmembrane segment spans residues 46 to 66; it reads LLMAVCLVGLVGNLCVIGILL. At 67–76 the chain is on the cytoplasmic side; it reads HGVWKRKPST. Residues 77 to 97 form a helical membrane-spanning segment; it reads IHSLILNLSLADFSLLLFSAP. Over 98 to 123 the chain is Extracellular; that stretch reads VRAAAYSKGVWDLGWFICKSSDWFTH. The cysteines at positions 115 and 191 are disulfide-linked. The helical transmembrane segment at 124–144 threads the bilayer; the sequence is VCMAAKSLTFVVVAKACFAYA. Over 145–157 the chain is Cytoplasmic; the sequence is SDPAKQESIHSRT. Residues 158 to 178 traverse the membrane as a helical segment; it reads IWSVLAGIWVVASLLPLPEWL. Residues 179-205 lie on the Extracellular side of the membrane; the sequence is FSTTRRHAGVEMCLVDVPAVAEEFMSM. A helical membrane pass occupies residues 206-226; it reads FGKLYPLLVFCLPLLLAGVYF. At 227 to 259 the chain is on the cytoplasmic side; the sequence is WRAYDQCKTRCTKTRNLRDQMRSKQLTVMLLST. The helical transmembrane segment at 260–280 threads the bilayer; it reads AIISALLWLPEWIAWLWVWHV. Over 281–290 the chain is Extracellular; the sequence is KAGGPMPPQG. Residues 291-311 traverse the membrane as a helical segment; the sequence is FIALSQVLMFFTSTANPLIFL. At 312–422 the chain is on the cytoplasmic side; that stretch reads VMSEEFKAGL…HEGQETEGCN (111 aa). Residues 339–422 form a disordered region; sequence VQEAPAGNTE…HEGQETEGCN (84 aa). Residues 366–380 are compositionally biased toward basic and acidic residues; sequence TDGRGSPDDSKEKSG.

In terms of tissue distribution, high expression in the brain and lower levels in kidney and liver. In the nervous system expressed specifically in the habenular area (at protein level).

The protein localises to the cell membrane. Its function is as follows. Proton-sensing G-protein coupled receptor. The chain is G-protein coupled receptor 151 protein (Gpr151) from Mus musculus (Mouse).